Consider the following 144-residue polypeptide: Transcription antitermination protein NusB (144 aa).

It belongs to the NusB family.

Involved in transcription antitermination. Required for transcription of ribosomal RNA (rRNA) genes. Binds specifically to the boxA antiterminator sequence of the ribosomal RNA (rrn) operons. The protein is Transcription antitermination protein NusB of Haemophilus influenzae (strain 86-028NP).